Reading from the N-terminus, the 163-residue chain is Small ribosomal subunit protein uS9 (163 aa).

Positions 1 to 11 are enriched in polar residues; the sequence is MAENTNDSQVV. Positions 1–40 are disordered; that stretch reads MAENTNDSQVVETEEELTNYTTETNAGAGTGTSAIEPGYG. Low complexity predominate over residues 18-27; that stretch reads TNYTTETNAG.

Belongs to the universal ribosomal protein uS9 family.

The sequence is that of Small ribosomal subunit protein uS9 from Bifidobacterium longum (strain DJO10A).